A 523-amino-acid chain; its full sequence is Peptide chain release factor 3 (523 aa).

In terms of domain architecture, tr-type G spans 8 to 275; sequence KKRRTFAIIS…TFLEYAPEPH (268 aa). GTP-binding positions include 17 to 24, 85 to 89, and 139 to 142; these read SHPDAGKT, DTPGH, and NKLD.

This sequence belongs to the TRAFAC class translation factor GTPase superfamily. Classic translation factor GTPase family. PrfC subfamily.

It localises to the cytoplasm. Its function is as follows. Increases the formation of ribosomal termination complexes and stimulates activities of RF-1 and RF-2. It binds guanine nucleotides and has strong preference for UGA stop codons. It may interact directly with the ribosome. The stimulation of RF-1 and RF-2 is significantly reduced by GTP and GDP, but not by GMP. This is Peptide chain release factor 3 from Lactococcus lactis subsp. cremoris (strain SK11).